Reading from the N-terminus, the 1928-residue chain is Myosin-1 (1928 aa).

The Myosin N-terminal SH3-like domain occupies Ser-8–Pro-71. Residues Asp-75–Asp-791 form the Myosin motor domain. Gly-180–Thr-187 provides a ligand contact to ATP. Positions Ile-460–Ser-529 are actin-binding. The segment covering Ser-629–Gln-641 has biased composition (polar residues). Positions Ser-629–Ser-657 are disordered. Residues Leu-794–Lys-823 enclose the IQ domain. Positions Ser-856–Met-1911 form a coiled coil.

Belongs to the TRAFAC class myosin-kinesin ATPase superfamily. Myosin family.

Its function is as follows. Required for cell division. This is Myosin-1 (MYO1) from Saccharomyces cerevisiae (strain ATCC 204508 / S288c) (Baker's yeast).